The primary structure comprises 443 residues: Probable glycine dehydrogenase (decarboxylating) subunit 1 (443 aa).

Belongs to the GcvP family. N-terminal subunit subfamily. As to quaternary structure, the glycine cleavage system is composed of four proteins: P, T, L and H. In this organism, the P 'protein' is a heterodimer of two subunits.

The enzyme catalyses N(6)-[(R)-lipoyl]-L-lysyl-[glycine-cleavage complex H protein] + glycine + H(+) = N(6)-[(R)-S(8)-aminomethyldihydrolipoyl]-L-lysyl-[glycine-cleavage complex H protein] + CO2. In terms of biological role, the glycine cleavage system catalyzes the degradation of glycine. The P protein binds the alpha-amino group of glycine through its pyridoxal phosphate cofactor; CO(2) is released and the remaining methylamine moiety is then transferred to the lipoamide cofactor of the H protein. The sequence is that of Probable glycine dehydrogenase (decarboxylating) subunit 1 from Maridesulfovibrio salexigens (strain ATCC 14822 / DSM 2638 / NCIMB 8403 / VKM B-1763) (Desulfovibrio salexigens).